Reading from the N-terminus, the 274-residue chain is Orotidine 5'-phosphate decarboxylase (274 aa).

Catalysis depends on Lys95, which acts as the Proton donor.

It belongs to the OMP decarboxylase family. Type 2 subfamily.

It carries out the reaction orotidine 5'-phosphate + H(+) = UMP + CO2. The protein operates within pyrimidine metabolism; UMP biosynthesis via de novo pathway; UMP from orotate: step 2/2. The protein is Orotidine 5'-phosphate decarboxylase of Variovorax paradoxus (strain S110).